Here is a 203-residue protein sequence, read N- to C-terminus: Cytochrome c biogenesis ATP-binding export protein CcmA (203 aa).

Positions 2-203 (LEALDLAGVR…KTSQTVRMGA (202 aa)) constitute an ABC transporter domain. 34–41 (GENGSGKT) contacts ATP.

The protein belongs to the ABC transporter superfamily. CcmA exporter (TC 3.A.1.107) family. As to quaternary structure, the complex is composed of two ATP-binding proteins (CcmA) and two transmembrane proteins (CcmB).

It is found in the cell inner membrane. The enzyme catalyses heme b(in) + ATP + H2O = heme b(out) + ADP + phosphate + H(+). Part of the ABC transporter complex CcmAB involved in the biogenesis of c-type cytochromes; once thought to export heme, this seems not to be the case, but its exact role is uncertain. Responsible for energy coupling to the transport system. The sequence is that of Cytochrome c biogenesis ATP-binding export protein CcmA from Pseudomonas aeruginosa.